A 163-amino-acid chain; its full sequence is Ribosome maturation factor RimP (163 aa).

Belongs to the RimP family.

It localises to the cytoplasm. Functionally, required for maturation of 30S ribosomal subunits. In Polynucleobacter necessarius subsp. necessarius (strain STIR1), this protein is Ribosome maturation factor RimP.